We begin with the raw amino-acid sequence, 467 residues long: Ribulose bisphosphate carboxylase large chain (467 aa).

Residues 1–2 constitute a propeptide that is removed on maturation; it reads MS. P3 carries the N-acetylproline modification. An N6,N6,N6-trimethyllysine modification is found at K14. Substrate is bound by residues N123 and T173. Residue K175 is the Proton acceptor of the active site. K177 provides a ligand contact to substrate. Positions 201, 203, and 204 each coordinate Mg(2+). K201 carries the N6-carboxylysine modification. The active-site Proton acceptor is H294. R295, H327, and S379 together coordinate substrate.

The protein belongs to the RuBisCO large chain family. Type I subfamily. Heterohexadecamer of 8 large chains and 8 small chains; disulfide-linked. The disulfide link is formed within the large subunit homodimers. Requires Mg(2+) as cofactor. Post-translationally, the disulfide bond which can form in the large chain dimeric partners within the hexadecamer appears to be associated with oxidative stress and protein turnover.

The protein resides in the plastid. It localises to the chloroplast. It carries out the reaction 2 (2R)-3-phosphoglycerate + 2 H(+) = D-ribulose 1,5-bisphosphate + CO2 + H2O. It catalyses the reaction D-ribulose 1,5-bisphosphate + O2 = 2-phosphoglycolate + (2R)-3-phosphoglycerate + 2 H(+). Its function is as follows. RuBisCO catalyzes two reactions: the carboxylation of D-ribulose 1,5-bisphosphate, the primary event in carbon dioxide fixation, as well as the oxidative fragmentation of the pentose substrate in the photorespiration process. Both reactions occur simultaneously and in competition at the same active site. This Serenoa repens (Saw palmetto) protein is Ribulose bisphosphate carboxylase large chain.